The following is an 81-amino-acid chain: Protein RALF-like 7 (81 aa).

The signal sequence occupies residues methionine 1–glycine 29. Intrachain disulfides connect cysteine 46/cysteine 54 and cysteine 66/cysteine 72.

The protein belongs to the plant rapid alkalinization factor (RALF) family.

The protein localises to the secreted. Its function is as follows. Cell signaling peptide that may regulate plant stress, growth, and development. Mediates a rapid alkalinization of extracellular space by mediating a transient increase in the cytoplasmic Ca(2+) concentration leading to a calcium-dependent signaling events through a cell surface receptor and a concomitant activation of some intracellular mitogen-activated protein kinases. The protein is Protein RALF-like 7 (RALFL7) of Arabidopsis thaliana (Mouse-ear cress).